The sequence spans 156 residues: Small ribosomal subunit protein uS7 (156 aa).

As to quaternary structure, part of the 30S ribosomal subunit. Contacts proteins S9 and S11.

Its function is as follows. One of the primary rRNA binding proteins, it binds directly to 16S rRNA where it nucleates assembly of the head domain of the 30S subunit. Is located at the subunit interface close to the decoding center, probably blocks exit of the E-site tRNA. The protein is Small ribosomal subunit protein uS7 of Rhodopseudomonas palustris (strain ATCC BAA-98 / CGA009).